The chain runs to 485 residues: UDP-N-acetylmuramate--L-alanine ligase (485 aa).

Residue 129–135 (GTHGKTT) coordinates ATP.

It belongs to the MurCDEF family.

The protein localises to the cytoplasm. The enzyme catalyses UDP-N-acetyl-alpha-D-muramate + L-alanine + ATP = UDP-N-acetyl-alpha-D-muramoyl-L-alanine + ADP + phosphate + H(+). Its pathway is cell wall biogenesis; peptidoglycan biosynthesis. Cell wall formation. This is UDP-N-acetylmuramate--L-alanine ligase from Vibrio campbellii (strain ATCC BAA-1116).